The following is a 1076-amino-acid chain: DNA-directed RNA polymerase subunit beta (1076 aa).

It belongs to the RNA polymerase beta chain family. As to quaternary structure, in plastids the minimal PEP RNA polymerase catalytic core is composed of four subunits: alpha, beta, beta', and beta''. When a (nuclear-encoded) sigma factor is associated with the core the holoenzyme is formed, which can initiate transcription.

The protein resides in the plastid. The protein localises to the chloroplast. The enzyme catalyses RNA(n) + a ribonucleoside 5'-triphosphate = RNA(n+1) + diphosphate. Functionally, DNA-dependent RNA polymerase catalyzes the transcription of DNA into RNA using the four ribonucleoside triphosphates as substrates. The sequence is that of DNA-directed RNA polymerase subunit beta from Triticum aestivum (Wheat).